Reading from the N-terminus, the 48-residue chain is Large ribosomal subunit protein bL33A (48 aa).

This sequence belongs to the bacterial ribosomal protein bL33 family.

The sequence is that of Large ribosomal subunit protein bL33A from Streptococcus pyogenes serotype M28 (strain MGAS6180).